The primary structure comprises 257 residues: Type III pantothenate kinase (257 aa).

Asp5 to Lys12 contributes to the ATP binding site. Position 107 to 110 (Gly107 to Arg110) interacts with substrate. Asp109 (proton acceptor) is an active-site residue. Residue Thr133 participates in ATP binding.

Belongs to the type III pantothenate kinase family. In terms of assembly, homodimer. NH4(+) is required as a cofactor. The cofactor is K(+).

The protein resides in the cytoplasm. It carries out the reaction (R)-pantothenate + ATP = (R)-4'-phosphopantothenate + ADP + H(+). It participates in cofactor biosynthesis; coenzyme A biosynthesis; CoA from (R)-pantothenate: step 1/5. Its function is as follows. Catalyzes the phosphorylation of pantothenate (Pan), the first step in CoA biosynthesis. This Ehrlichia ruminantium (strain Welgevonden) protein is Type III pantothenate kinase.